A 456-amino-acid chain; its full sequence is MALPVVAIIGRPNVGKSTLVNRLCQSREAIVHDEPGVTRDRTYQDGFWRDRDFKVVDTGGLVFDDDSEFLPEIREQANLALEEAVVALVIVDGQEGITTADESIAEFLRSRSGKTLVVVNKCESPEQGLAMAAQFWKLGLGEPYPISAIHGVGTGDLLDQVVNLFPSKDLDEVSDSPVQLAIIGRPNVGKSSLLNSICGETRAIVSSIRGTTRDTIDTRITHQGKEWKLVDTAGIRRRRSVNYGPEFFGINRSFKAIERSDVCVLVIDALDGVTEQDQRLAGRIEQEGRACLIVINKWDAVEKDSHTMSAMEKDIRSKLYFLDWAQMIFTSAVTGQRVEGIFALATLAVDQSRRRVTTSVVNEVLTEALKWRSPPTTRGGKQGRLYYGTQVAINPPSFTLFVNEPKLFGETYRRYIERQIREGLGFEGTPIKLFWRGKQQRDVEKDMARQQKGVRN.

EngA-type G domains lie at 4–169 and 178–353; these read PVVA…PSKD and VQLA…DQSR. GTP-binding positions include 10–17, 57–61, 120–123, 184–191, 231–235, and 296–299; these read GRPNVGKS, DTGGL, NKCE, DTAGI, and NKWD. The KH-like domain maps to 354–439; sequence RRVTTSVVNE…PIKLFWRGKQ (86 aa).

The protein belongs to the TRAFAC class TrmE-Era-EngA-EngB-Septin-like GTPase superfamily. EngA (Der) GTPase family. In terms of assembly, associates with the 50S ribosomal subunit.

Its function is as follows. GTPase that plays an essential role in the late steps of ribosome biogenesis. The sequence is that of GTPase Der from Prochlorococcus marinus (strain NATL2A).